Here is a 748-residue protein sequence, read N- to C-terminus: E3 ubiquitin-protein ligase SMURF2 (748 aa).

A C2 domain is found at 1–119; sequence MSNPGGRRNG…TGYQRLDLCK (119 aa). K119 is covalently cross-linked (Glycyl lysine isopeptide (Lys-Gly) (interchain with G-Cter in ubiquitin)). 3 WW domains span residues 157 to 190, 251 to 284, and 297 to 330; these read NDLP…RPTR, PDLP…DPRV, and GPLP…DPRL. An HECT domain is found at 414–748; sequence RPKDLWKRLM…IEETCGFAVE (335 aa). C716 acts as the Glycyl thioester intermediate in catalysis.

As to quaternary structure, interacts (via WW domains) with SMAD1. Interacts (via WW domains) with SMAD2 (via PY-motif). Interacts (via WW domains) with SMAD3 (via PY-motif). Interacts with SMAD6. Interacts with SMAD7 (via PY-motif) and TGFBR1; SMAD7 recruits SMURF2 to the TGF-beta receptor and regulates its degradation. Does not interact with SMAD4; SMAD4 lacks a PY-motif. Interacts with AIMP1. Interacts with SNON. Interacts with STAMBP and RNF11. May interact with NDFIP1 and NDFIP2; this interaction induces the E3 ubiquitin-protein ligase activity. Interacts with TTC3. In terms of assembly, (Microbial infection) Interacts (via WW domains) with EBOV and MARV VP40 (via PPXY motif); the interaction facilitates VP40 virus-like particle budding. In terms of processing, auto-ubiquitinated and ubiquitinated in the presence of RNF11 and UBE2D1. Ubiquitinated by the SCF(FBXL15) complex and TTC3, leading to its degradation by the proteasome. 'Lys-48'-linked polyubiquitination mediated by TRAF4 at Lys-119 leads to SMURF2 proteasomal degradation. As to expression, widely expressed.

The protein localises to the nucleus. Its subcellular location is the cytoplasm. It localises to the cell membrane. It is found in the membrane raft. The catalysed reaction is S-ubiquitinyl-[E2 ubiquitin-conjugating enzyme]-L-cysteine + [acceptor protein]-L-lysine = [E2 ubiquitin-conjugating enzyme]-L-cysteine + N(6)-ubiquitinyl-[acceptor protein]-L-lysine.. It participates in protein modification; protein ubiquitination. Activated by NDFIP1- and NDFIP2-binding. In terms of biological role, E3 ubiquitin-protein ligase which accepts ubiquitin from an E2 ubiquitin-conjugating enzyme in the form of a thioester and then directly transfers the ubiquitin to targeted substrates. Interacts with SMAD7 to trigger SMAD7-mediated transforming growth factor beta/TGF-beta receptor ubiquitin-dependent degradation, thereby down-regulating TGF-beta signaling. In addition, interaction with SMAD7 activates autocatalytic degradation, which is prevented by interaction with AIMP1. Also forms a stable complex with TGF-beta receptor-mediated phosphorylated SMAD1, SMAD2 and SMAD3, and targets SMAD1 and SMAD2 for ubiquitination and proteasome-mediated degradation. SMAD2 may recruit substrates, such as SNON, for ubiquitin-dependent degradation. Negatively regulates TGFB1-induced epithelial-mesenchymal transition and myofibroblast differentiation. Functionally, (Microbial infection) In case of filoviruses Ebola/EBOV and Marburg/MARV infection, the complex formed by viral matrix protein VP40 and SMURF2 facilitates virus budding. The chain is E3 ubiquitin-protein ligase SMURF2 from Homo sapiens (Human).